A 424-amino-acid chain; its full sequence is Tyrosine--tRNA ligase (424 aa).

Tyrosine 37 serves as a coordination point for L-tyrosine. The 'HIGH' region motif lies at 42–51 (PTADSLHLGH). An N6-acetyllysine modification is found at lysine 144. L-tyrosine is bound by residues tyrosine 175 and glutamine 179. A 'KMSKS' region motif is present at residues 235–239 (KFGKT). Position 238 (lysine 238) interacts with ATP. One can recognise an S4 RNA-binding domain in the interval 357 to 414 (ADLMQALVDSELQPSRGQARKTIASNAITINGEKQSDPEYFFKEEDRLFGRFTLLRRG).

Belongs to the class-I aminoacyl-tRNA synthetase family. TyrS type 1 subfamily. Homodimer.

The protein localises to the cytoplasm. It carries out the reaction tRNA(Tyr) + L-tyrosine + ATP = L-tyrosyl-tRNA(Tyr) + AMP + diphosphate + H(+). Catalyzes the attachment of tyrosine to tRNA(Tyr) in a two-step reaction: tyrosine is first activated by ATP to form Tyr-AMP and then transferred to the acceptor end of tRNA(Tyr). The chain is Tyrosine--tRNA ligase from Shigella boydii serotype 4 (strain Sb227).